The following is a 420-amino-acid chain: Glucose-1-phosphate adenylyltransferase (420 aa).

Alpha-D-glucose 1-phosphate-binding positions include Tyr107, Gly172, 187–188, and Ser205; that span reads EK.

The protein belongs to the bacterial/plant glucose-1-phosphate adenylyltransferase family. As to quaternary structure, homotetramer.

The catalysed reaction is alpha-D-glucose 1-phosphate + ATP + H(+) = ADP-alpha-D-glucose + diphosphate. Its pathway is glycan biosynthesis; glycogen biosynthesis. Involved in the biosynthesis of ADP-glucose, a building block required for the elongation reactions to produce glycogen. Catalyzes the reaction between ATP and alpha-D-glucose 1-phosphate (G1P) to produce pyrophosphate and ADP-Glc. This Rhizobium radiobacter (Agrobacterium tumefaciens) protein is Glucose-1-phosphate adenylyltransferase.